A 248-amino-acid chain; its full sequence is 23S rRNA (guanosine-2'-O-)-methyltransferase RlmB (248 aa).

Glycine 198, leucine 218, and leucine 227 together coordinate S-adenosyl-L-methionine.

This sequence belongs to the class IV-like SAM-binding methyltransferase superfamily. RNA methyltransferase TrmH family. RlmB subfamily.

It is found in the cytoplasm. It catalyses the reaction guanosine(2251) in 23S rRNA + S-adenosyl-L-methionine = 2'-O-methylguanosine(2251) in 23S rRNA + S-adenosyl-L-homocysteine + H(+). In terms of biological role, specifically methylates the ribose of guanosine 2251 in 23S rRNA. The polypeptide is 23S rRNA (guanosine-2'-O-)-methyltransferase RlmB (Pseudomonas aeruginosa (strain ATCC 15692 / DSM 22644 / CIP 104116 / JCM 14847 / LMG 12228 / 1C / PRS 101 / PAO1)).